Here is a 708-residue protein sequence, read N- to C-terminus: Putative adhesion G protein-coupled receptor F2P (708 aa).

Topologically, residues 1 to 451 (MGLTAYGNRR…ESLILTYITY (451 aa)) are extracellular. N-linked (GlcNAc...) asparagine glycosylation is found at Asn-21, Asn-220, Asn-252, Asn-260, Asn-305, Asn-313, and Asn-358. The region spanning 293–442 (MGTTISGDNI…SILMSPHILE (150 aa)) is the GAIN-B domain. Intrachain disulfides connect Cys-394-Cys-421 and Cys-409-Cys-423. The GPS stretch occupies residues 394–442 (CVGWHSVENRWDQQACKMIQENSQQAVCKCRPSKLFTSFSILMSPHILE). The helical transmembrane segment at 452 to 472 (VGLGISICSLILCLSIEVLVW) threads the bilayer. Over 473–487 (SQVTKTEITYLRHVC) the chain is Cytoplasmic. A helical transmembrane segment spans residues 488 to 508 (IVNIAATLLMADVWFIVASFL). Over 509–530 (SGPITHHKGCVAATFFVHFFYL) the chain is Extracellular. A helical transmembrane segment spans residues 531–551 (SVFFWMLAKALLILYGIMIVF). Residues 552 to 557 (HTLPKS) lie on the Cytoplasmic side of the membrane. A helical transmembrane segment spans residues 558-578 (VLVASLFSVGYGCPLAIAAIT). At 579 to 606 (VAATEPGKGYLRPEICWLNWDMTKALLA) the chain is on the extracellular side. The chain crosses the membrane as a helical span at residues 607 to 627 (FVIPALAIVVVNLITVTLVIV). The Cytoplasmic segment spans residues 628 to 650 (KTQRAAIGNSMFQEVRAIVRISK). The chain crosses the membrane as a helical span at residues 651 to 671 (NIAILTPLLGLTWGFGVATVI). The Extracellular portion of the chain corresponds to 672–674 (DDR). The chain crosses the membrane as a helical span at residues 675–695 (SLAFHIIFSLLNAFQVSPDAS). Residues 696–708 (DQVQSERIHEDVL) lie on the Cytoplasmic side of the membrane.

The protein belongs to the G-protein coupled receptor 2 family. Adhesion G-protein coupled receptor (ADGR) subfamily. In terms of tissue distribution, high expression in kidney. Up-regulated in lung adenocarcinomas and prostate cancers.

The protein localises to the membrane. In terms of biological role, orphan receptor. In Homo sapiens (Human), this protein is Putative adhesion G protein-coupled receptor F2P.